We begin with the raw amino-acid sequence, 353 residues long: UPF0283 membrane protein YcjF (353 aa).

Residues 1 to 19 are compositionally biased toward basic and acidic residues; the sequence is MSEPLKPRIDFAEPLKEEP. The segment at 1-35 is disordered; that stretch reads MSEPLKPRIDFAEPLKEEPTSAFKAQQTFSEAESR. The Periplasmic portion of the chain corresponds to 1–69; it reads MSEPLKPRID…LRPKRSLWRK (69 aa). A helical transmembrane segment spans residues 70–90; sequence MVMGGLALFGASVVGQGVQWT. Residues 91–99 lie on the Cytoplasmic side of the membrane; sequence MNAWQTQDW. Residues 100–120 traverse the membrane as a helical segment; that stretch reads VALGGCAAGALIVGAGVGSVV. Residues 121-212 are Periplasmic-facing; sequence TEWRRLWRLR…ARREISRFAA (92 aa). The helical transmembrane segment at 213 to 233 threads the bilayer; that stretch reads ESTLMIAVSPLALVDMAFIAW. Residues 234–353 are Cytoplasmic-facing; it reads RNLRLINRIA…LQKSKSSPEK (120 aa).

This sequence belongs to the UPF0283 family.

The protein localises to the cell inner membrane. The sequence is that of UPF0283 membrane protein YcjF (ycjF) from Salmonella typhimurium (strain LT2 / SGSC1412 / ATCC 700720).